The chain runs to 77 residues: MKEQKLIHEGVIIESLPNGMFRVRLDNEDLILGYVSGRIRRSFIRILPGDRVKIEVSRYDSTKGRIIYRLRNKDSND.

The region spanning 1–71 is the S1-like domain; it reads MKEQKLIHEG…TKGRIIYRLR (71 aa).

It belongs to the IF-1 family. In terms of assembly, component of the 30S ribosomal translation pre-initiation complex which assembles on the 30S ribosome in the order IF-2 and IF-3, IF-1 and N-formylmethionyl-tRNA(fMet); mRNA recruitment can occur at any time during PIC assembly.

The protein resides in the plastid. The protein localises to the chloroplast. In terms of biological role, one of the essential components for the initiation of protein synthesis. Stabilizes the binding of IF-2 and IF-3 on the 30S subunit to which N-formylmethionyl-tRNA(fMet) subsequently binds. Helps modulate mRNA selection, yielding the 30S pre-initiation complex (PIC). Upon addition of the 50S ribosomal subunit IF-1, IF-2 and IF-3 are released leaving the mature 70S translation initiation complex. This is Translation initiation factor IF-1, chloroplastic from Dioscorea elephantipes (Elephant's foot yam).